We begin with the raw amino-acid sequence, 631 residues long: Phosphomethylpyrimidine synthase (631 aa).

Substrate contacts are provided by residues Asn-239, Met-268, Tyr-297, His-333, 353 to 355 (SRG), 394 to 397 (DGLR), and Glu-433. A Zn(2+)-binding site is contributed by His-437. Residue Tyr-460 coordinates substrate. His-501 is a Zn(2+) binding site. Residues Cys-581, Cys-584, and Cys-589 each contribute to the [4Fe-4S] cluster site.

It belongs to the ThiC family. As to quaternary structure, homodimer. The cofactor is [4Fe-4S] cluster.

It carries out the reaction 5-amino-1-(5-phospho-beta-D-ribosyl)imidazole + S-adenosyl-L-methionine = 4-amino-2-methyl-5-(phosphooxymethyl)pyrimidine + CO + 5'-deoxyadenosine + formate + L-methionine + 3 H(+). It participates in cofactor biosynthesis; thiamine diphosphate biosynthesis. Catalyzes the synthesis of the hydroxymethylpyrimidine phosphate (HMP-P) moiety of thiamine from aminoimidazole ribotide (AIR) in a radical S-adenosyl-L-methionine (SAM)-dependent reaction. This is Phosphomethylpyrimidine synthase from Salmonella typhi.